Consider the following 423-residue polypeptide: Major royal jelly protein 9 (423 aa).

An N-terminal signal peptide occupies residues 1–20 (MSFNIWWLILYFSIVCQAKA). N-linked (GlcNAc...) asparagine glycosylation is found at Asn-110, Asn-118, Asn-177, Asn-196, and Asn-345.

This sequence belongs to the major royal jelly protein family. In terms of tissue distribution, expressed at very low levels in the hypopharyngeal glands of adult worker bees (at protein level); expression peaks at 12 days post eclosion. Secreted into bee venom in the sting apparatus (at protein level). Expressed in the brains of adult worker bees peaking at 12 days post eclosion (at protein level). Expressed in the spermatheca of adult queen bees (at protein level); expression levels are higher in mated queens than in virgin queens. Along with Mrjp8 expressed at very low levels in the head of worker bees compared to other major royal jelly proteins.

Its subcellular location is the secreted. Functionally, component of bee sting venom. Component of royal jelly, a substance produced in the hypopharyngeal gland containing proteins, free amino acids, fatty acids, sugars and other nutrients, which is fed to developing larvae by worker nurse bees; may be present only at trace levels. All larvae are fed some royal jelly (also known as worker jelly) early in their development but it forms the principal source of nutrition for larvae destined to become queen bees. Produced in the spermatheca of adult queen bees, along with other major royal jelly proteins, where it may act as a nutrient supply for sperm stored by mated queens, or be involved in energy metabolism. The chain is Major royal jelly protein 9 from Apis mellifera (Honeybee).